The sequence spans 116 residues: Protein cop (116 aa).

Putative control of replication message. The polypeptide is Protein cop (cop) (Staphylococcus aureus).